A 314-amino-acid chain; its full sequence is Porphobilinogen deaminase (314 aa).

Cysteine 249 carries the S-(dipyrrolylmethanemethyl)cysteine modification.

The protein belongs to the HMBS family. In terms of assembly, monomer. Dipyrromethane serves as cofactor.

The catalysed reaction is 4 porphobilinogen + H2O = hydroxymethylbilane + 4 NH4(+). It functions in the pathway porphyrin-containing compound metabolism; protoporphyrin-IX biosynthesis; coproporphyrinogen-III from 5-aminolevulinate: step 2/4. In terms of biological role, tetrapolymerization of the monopyrrole PBG into the hydroxymethylbilane pre-uroporphyrinogen in several discrete steps. This chain is Porphobilinogen deaminase, found in Brucella abortus (strain S19).